The following is an 896-amino-acid chain: Rho GTPase-activating protein gacM (896 aa).

Residues 1–97 form a disordered region; that stretch reads MSSFIGWKKN…SSNDTIGKSS (97 aa). A compositionally biased stretch (low complexity) spans 10 to 26; that stretch reads NSNSGGTPGASPTSSSP. Residues 27–38 show a composition bias toward polar residues; it reads LNSTISNANSVS. Low complexity-rich tracts occupy residues 45-57 and 65-97; these read SISN…LSSS and NSNN…GKSS. The Rho-GAP domain maps to 139-330; sequence QPINPNTEFG…LWIEEFDMIS (192 aa). Low complexity-rich tracts occupy residues 375 to 391, 400 to 427, 448 to 460, and 473 to 506; these read IQQQ…QSHP, SSLS…LLPT, PTPT…TPQT, and NNNS…NNNN. Disordered regions lie at residues 375 to 514 and 701 to 770; these read IQQQ…GSPL and LPTG…ENQI. Positions 702–711 are enriched in polar residues; sequence PTGSSWSDFE. Low complexity-rich tracts occupy residues 712–743 and 751–761; these read NNSS…NSSP and SNGLNSSSNSN.

The protein localises to the cytoplasm. Rho GTPase-activating protein involved in the signal transduction pathway. This Dictyostelium discoideum (Social amoeba) protein is Rho GTPase-activating protein gacM (gacM).